The primary structure comprises 249 residues: Coproheme decarboxylase (249 aa).

Fe-coproporphyrin III is bound by residues R131, 145-149, H172, and Q185; that span reads YPMNK. The active site involves Y145.

This sequence belongs to the ChdC family. Type 1 subfamily. Fe-coproporphyrin III serves as cofactor.

The catalysed reaction is Fe-coproporphyrin III + 2 H2O2 + 2 H(+) = heme b + 2 CO2 + 4 H2O. The enzyme catalyses Fe-coproporphyrin III + H2O2 + H(+) = harderoheme III + CO2 + 2 H2O. It catalyses the reaction harderoheme III + H2O2 + H(+) = heme b + CO2 + 2 H2O. Its pathway is porphyrin-containing compound metabolism; protoheme biosynthesis. Functionally, involved in coproporphyrin-dependent heme b biosynthesis. Catalyzes the decarboxylation of Fe-coproporphyrin III (coproheme) to heme b (protoheme IX), the last step of the pathway. The reaction occurs in a stepwise manner with a three-propionate intermediate. The sequence is that of Coproheme decarboxylase from Staphylococcus carnosus (strain TM300).